A 291-amino-acid chain; its full sequence is 4-hydroxybenzoate octaprenyltransferase (291 aa).

8 consecutive transmembrane segments (helical) span residues 23–43, 47–67, 98–118, 139–159, 171–191, 216–236, 238–258, and 267–287; these read PIGT…AADG, PALV…GCAI, LAVA…LNAL, FFAI…PMAY, WLML…YAMV, IMLC…ALAL, AAYW…YTLL, and FFVF…AALA.

It belongs to the UbiA prenyltransferase family. Mg(2+) serves as cofactor.

The protein resides in the cell inner membrane. The enzyme catalyses all-trans-octaprenyl diphosphate + 4-hydroxybenzoate = 4-hydroxy-3-(all-trans-octaprenyl)benzoate + diphosphate. Its pathway is cofactor biosynthesis; ubiquinone biosynthesis. Catalyzes the prenylation of para-hydroxybenzoate (PHB) with an all-trans polyprenyl group. Mediates the second step in the final reaction sequence of ubiquinone-8 (UQ-8) biosynthesis, which is the condensation of the polyisoprenoid side chain with PHB, generating the first membrane-bound Q intermediate 3-octaprenyl-4-hydroxybenzoate. This is 4-hydroxybenzoate octaprenyltransferase from Ralstonia nicotianae (strain ATCC BAA-1114 / GMI1000) (Ralstonia solanacearum).